The chain runs to 438 residues: Serine--tRNA ligase (438 aa).

An L-serine-binding site is contributed by 245–247; sequence TAE. Residue 276–278 coordinates ATP; that stretch reads RSE. L-serine is bound at residue glutamate 299. 363–366 provides a ligand contact to ATP; sequence EISS. Serine 398 contacts L-serine.

It belongs to the class-II aminoacyl-tRNA synthetase family. Type-1 seryl-tRNA synthetase subfamily. In terms of assembly, homodimer. The tRNA molecule binds across the dimer.

The protein resides in the cytoplasm. The enzyme catalyses tRNA(Ser) + L-serine + ATP = L-seryl-tRNA(Ser) + AMP + diphosphate + H(+). The catalysed reaction is tRNA(Sec) + L-serine + ATP = L-seryl-tRNA(Sec) + AMP + diphosphate + H(+). The protein operates within aminoacyl-tRNA biosynthesis; selenocysteinyl-tRNA(Sec) biosynthesis; L-seryl-tRNA(Sec) from L-serine and tRNA(Sec): step 1/1. Catalyzes the attachment of serine to tRNA(Ser). Is also able to aminoacylate tRNA(Sec) with serine, to form the misacylated tRNA L-seryl-tRNA(Sec), which will be further converted into selenocysteinyl-tRNA(Sec). The protein is Serine--tRNA ligase of Delftia acidovorans (strain DSM 14801 / SPH-1).